We begin with the raw amino-acid sequence, 224 residues long: MSDILYTVNGITRTNDQQGKGASRRLRKQNLVPAIIYGGNEEPTAIAIKKNELWKLLENEAFFSNILTINLEGEEHLAVIKDLQRHPSKGFAMHADFQRIVKGQKINMQIPLHFTGREEAPGIKAGGILSTLVTDIEIVCLPSNLPEFLEVDVSNLEIGESLHLTDIKLPEGVVIFELDVDEPVDRTVVNMQAPTVEEVDTDAEEVDAADVPATEQGSEEDKGE.

The segment at 196 to 224 (VEEVDTDAEEVDAADVPATEQGSEEDKGE) is disordered. Acidic residues predominate over residues 197-208 (EEVDTDAEEVDA).

Belongs to the bacterial ribosomal protein bL25 family. CTC subfamily. Part of the 50S ribosomal subunit; part of the 5S rRNA/L5/L18/L25 subcomplex. Contacts the 5S rRNA. Binds to the 5S rRNA independently of L5 and L18.

Functionally, this is one of the proteins that binds to the 5S RNA in the ribosome where it forms part of the central protuberance. The sequence is that of Large ribosomal subunit protein bL25 from Psychrobacter sp. (strain PRwf-1).